Consider the following 167-residue polypeptide: Translation initiation factor IF-3 (167 aa).

It belongs to the IF-3 family. Monomer.

Its subcellular location is the cytoplasm. IF-3 binds to the 30S ribosomal subunit and shifts the equilibrium between 70S ribosomes and their 50S and 30S subunits in favor of the free subunits, thus enhancing the availability of 30S subunits on which protein synthesis initiation begins. The chain is Translation initiation factor IF-3 from Bacillus anthracis.